The primary structure comprises 245 residues: Glutathione S-transferase F4 (245 aa).

One can recognise a GST N-terminal domain in the interval 25–106; the sequence is AGYKVHGDPF…YIAYVHSSRG (82 aa). Glutathione-binding positions include 35 to 36, 64 to 65, 77 to 78, and 90 to 91; these read ST, HK, QV, and ES. A GST C-terminal domain is found at 114-244; that stretch reads SHETMATLTM…QEKSWFNKPR (131 aa).

Belongs to the GST superfamily. Phi family.

It is found in the cytoplasm. It localises to the cytosol. The enzyme catalyses RX + glutathione = an S-substituted glutathione + a halide anion + H(+). May be involved in the conjugation of reduced glutathione to a wide number of exogenous and endogenous hydrophobic electrophiles and have a detoxification role against certain herbicides. The polypeptide is Glutathione S-transferase F4 (GSTF4) (Arabidopsis thaliana (Mouse-ear cress)).